A 685-amino-acid chain; its full sequence is Multisite-specific tRNA:(cytosine-C(5))-methyltransferase trm4b (685 aa).

Residues 167–173 (CAAPGSK), D208, D235, and D270 contribute to the S-adenosyl-L-methionine site. The active-site Nucleophile is the C323.

Belongs to the class I-like SAM-binding methyltransferase superfamily. RsmB/NOP family. TRM4 subfamily.

The protein localises to the nucleus. It catalyses the reaction cytidine(49) in tRNA precursor + S-adenosyl-L-methionine = 5-methylcytidine(49) in tRNA precursor + S-adenosyl-L-homocysteine + H(+). The enzyme catalyses cytidine(50) in tRNA + S-adenosyl-L-methionine = 5-methylcytidine(50) in tRNA + S-adenosyl-L-homocysteine + H(+). It carries out the reaction cytidine(60) in tRNA(Asp) + S-adenosyl-L-methionine = 5-methylcytidine(60) in tRNA(Asp) + S-adenosyl-L-homocysteine + H(+). The catalysed reaction is cytidine(61) in tRNA(Asp) + S-adenosyl-L-methionine = 5-methylcytidine(61) in tRNA(Asp) + S-adenosyl-L-homocysteine + H(+). It catalyses the reaction cytidine(62) in tRNA(Asp) + S-adenosyl-L-methionine = 5-methylcytidine(62) in tRNA(Asp) + S-adenosyl-L-homocysteine + H(+). Functionally, tRNA cytosine C(5)-methyltransferase that methylates cytosine to 5-methylcytosine (m5C) in tRNAs at position 49 and 50. Trm4a and trm4b methylate different sets of tRNAs. Also methylates cytosine to m5C at positions (60, 61 and 62) in tRNA(Asp). This Schizosaccharomyces pombe (strain 972 / ATCC 24843) (Fission yeast) protein is Multisite-specific tRNA:(cytosine-C(5))-methyltransferase trm4b.